The sequence spans 308 residues: Glutaminase (308 aa).

7 residues coordinate substrate: Ser66, Asn117, Glu161, Asn168, Tyr192, Tyr244, and Val262.

This sequence belongs to the glutaminase family. As to quaternary structure, homotetramer.

The catalysed reaction is L-glutamine + H2O = L-glutamate + NH4(+). The chain is Glutaminase from Proteus mirabilis (strain HI4320).